The primary structure comprises 621 residues: Archaeal Lon protease (621 aa).

Residues 1–117 lie on the Cytoplasmic side of the membrane; it reads MNEEVREILG…YKEEAMKKAQ (117 aa). 54-61 contributes to the ATP binding site; the sequence is GSPGTGKS. The chain crosses the membrane as a helical span at residues 118–136; the sequence is ARNFLIFTLVFLVIGYTVL. Residues 137–141 are Extracellular-facing; that stretch reads TNPGN. A helical membrane pass occupies residues 142-160; the sequence is LIWGIIAAVLILMMSRYFI. The Cytoplasmic segment spans residues 161 to 621; sequence PREDRNVPKL…KFKELELAAV (461 aa). Residues 423–602 form the Lon proteolytic domain; it reads GYEVGRVNGL…NEVLEHVLED (180 aa). Catalysis depends on residues Ser509 and Lys552.

Belongs to the peptidase S16 family. Archaeal LonB subfamily. As to quaternary structure, homohexamer. Organized in a ring with a central cavity.

The protein resides in the cell membrane. Functionally, ATP-dependent serine protease that mediates the selective degradation of mutant and abnormal proteins as well as certain short-lived regulatory proteins. Degrades polypeptides processively. The chain is Archaeal Lon protease from Archaeoglobus fulgidus (strain ATCC 49558 / DSM 4304 / JCM 9628 / NBRC 100126 / VC-16).